Here is a 147-residue protein sequence, read N- to C-terminus: Protein phosphatase 1 regulatory subunit 14A (147 aa).

The segment covering 1 to 11 (MAAQRLGKRVL) has biased composition (basic residues). The tract at residues 1–36 (MAAQRLGKRVLSKLQSPSRARGPGGSPSGLQKRHAR) is disordered. Ser-26 bears the Phosphoserine mark. Positions 35 to 120 (ARVTVKYDRR…LLAKLRGLHK (86 aa)) are inhibitory. A Phosphothreonine; by PKC modification is found at Thr-38. A disordered region spans residues 118–147 (LHKQPGFPQPSPSDDPSLSPRQDRAHTAPP). Phosphoserine is present on residues Ser-128, Ser-134, and Ser-136. Basic and acidic residues predominate over residues 138–147 (RQDRAHTAPP).

This sequence belongs to the PP1 inhibitor family.

The protein resides in the cytoplasm. Its function is as follows. Inhibitor of PPP1CA. Has over 1000-fold higher inhibitory activity when phosphorylated, creating a molecular switch for regulating the phosphorylation status of PPP1CA substrates and smooth muscle contraction. The chain is Protein phosphatase 1 regulatory subunit 14A (Ppp1r14a) from Mus musculus (Mouse).